Consider the following 282-residue polypeptide: Bis(5'-nucleosyl)-tetraphosphatase, symmetrical (282 aa).

Belongs to the Ap4A hydrolase family.

It carries out the reaction P(1),P(4)-bis(5'-adenosyl) tetraphosphate + H2O = 2 ADP + 2 H(+). Its function is as follows. Hydrolyzes diadenosine 5',5'''-P1,P4-tetraphosphate to yield ADP. This Burkholderia thailandensis (strain ATCC 700388 / DSM 13276 / CCUG 48851 / CIP 106301 / E264) protein is Bis(5'-nucleosyl)-tetraphosphatase, symmetrical.